The sequence spans 361 residues: Chorismate synthase (361 aa).

NADP(+)-binding residues include R48 and R54. FMN contacts are provided by residues 125 to 127, 238 to 239, G278, 293 to 297, and R319; these read RSS, NA, and KPTSS.

This sequence belongs to the chorismate synthase family. As to quaternary structure, homotetramer. FMNH2 is required as a cofactor.

It carries out the reaction 5-O-(1-carboxyvinyl)-3-phosphoshikimate = chorismate + phosphate. Its pathway is metabolic intermediate biosynthesis; chorismate biosynthesis; chorismate from D-erythrose 4-phosphate and phosphoenolpyruvate: step 7/7. Functionally, catalyzes the anti-1,4-elimination of the C-3 phosphate and the C-6 proR hydrogen from 5-enolpyruvylshikimate-3-phosphate (EPSP) to yield chorismate, which is the branch point compound that serves as the starting substrate for the three terminal pathways of aromatic amino acid biosynthesis. This reaction introduces a second double bond into the aromatic ring system. This Klebsiella pneumoniae subsp. pneumoniae (strain ATCC 700721 / MGH 78578) protein is Chorismate synthase.